Here is a 1489-residue protein sequence, read N- to C-terminus: Ras GTPase-activating-like protein rng2 (1489 aa).

The Calponin-homology (CH) domain occupies 41-147; it reads LCRVDEAKKW…YCIHALSYFL (107 aa). IQ domains lie at 359–388, 389–418, 418–449, 535–564, 565–594, and 655–684; these read QSSS…AYDE, LVNW…QEEA, ATKS…DLFT, ELDN…KLKA, STSS…SFQK, and FIPE…NFHK. Positions 734–770 form a coiled coil; that stretch reads EEEVLLEKMRKEIVQQVRDNEEIEVHINELDVKIALL. A Ras-GAP domain is found at 870–1110; that stretch reads VLLLRFISQV…QDTMLMLERL (241 aa). Residues 1330-1364 are a coiled coil; the sequence is QSLLNLREKRAFLDSQLKSYNEYIEQAMETLQSKK.

In terms of assembly, interacts with calmodulin cam1.

It is found in the cytoplasm. The protein resides in the cytoskeleton. The protein localises to the nucleus envelope. It localises to the microtubule organizing center. Its subcellular location is the spindle pole body. In terms of biological role, component of the contractile F-actin ring; required for its construction following assembly of F-actin at the division site. This chain is Ras GTPase-activating-like protein rng2, found in Schizosaccharomyces pombe (strain 972 / ATCC 24843) (Fission yeast).